A 222-amino-acid polypeptide reads, in one-letter code: Potassium-transporting ATPase KdpC subunit (222 aa).

A helical membrane pass occupies residues 13–35; that stretch reads WAGLRSLLVLTVVTGVLYPLAVT. A disordered region spans residues 136-162; that stretch reads TADHKVKPSDVPADAVTSSGSGLDPDI.

Belongs to the KdpC family. The system is composed of three essential subunits: KdpA, KdpB and KdpC.

It is found in the cell membrane. Part of the high-affinity ATP-driven potassium transport (or Kdp) system, which catalyzes the hydrolysis of ATP coupled with the electrogenic transport of potassium into the cytoplasm. This subunit acts as a catalytic chaperone that increases the ATP-binding affinity of the ATP-hydrolyzing subunit KdpB by the formation of a transient KdpB/KdpC/ATP ternary complex. This is Potassium-transporting ATPase KdpC subunit from Streptomyces avermitilis (strain ATCC 31267 / DSM 46492 / JCM 5070 / NBRC 14893 / NCIMB 12804 / NRRL 8165 / MA-4680).